The primary structure comprises 626 residues: Janus kinase and microtubule-interacting protein 1 (626 aa).

The disordered stretch occupies residues 1–25 (MSKKGRSKGDKPEAETDSVQMANEE). The mediates association with microtubules stretch occupies residues 1 to 365 (MSKKGRSKGD…KLKSLTRENV (365 aa)). Coiled-coil stretches lie at residues 13–255 (EAET…EAER) and 284–413 (ERDV…DDLS). The mediates interaction with TYK2 and GABBR1 stretch occupies residues 365–626 (VEMKEKLSAQ…ILFEPKLKFM (262 aa)). A Phosphoserine modification is found at serine 382. The segment covering 452 to 461 (ETLSETSYNT) has biased composition (polar residues). Residues 452 to 481 (ETLSETSYNTDRTDRTPATPEEDLDETTTR) form a disordered region. Threonine 470 bears the Phosphothreonine mark. Residues 490-604 (QLTREYQALQ…EFRVLELEVR (115 aa)) are a coiled coil.

The protein belongs to the JAKMIP family. Homodimer. Interacts with JAK1 and TYK2. Forms a complex with GABBR1 and KIF5B/kinesin-1. Post-translationally, phosphorylated.

It is found in the cytoplasm. The protein localises to the cytoskeleton. Its subcellular location is the membrane. Its function is as follows. Associates with microtubules and may play a role in the microtubule-dependent transport of the GABA-B receptor. May play a role in JAK1 signaling and regulate microtubule cytoskeleton rearrangements. The protein is Janus kinase and microtubule-interacting protein 1 (Jakmip1) of Mus musculus (Mouse).